Here is a 481-residue protein sequence, read N- to C-terminus: Aspartyl/glutamyl-tRNA(Asn/Gln) amidotransferase subunit B (481 aa).

This sequence belongs to the GatB/GatE family. GatB subfamily. Heterotrimer of A, B and C subunits.

It carries out the reaction L-glutamyl-tRNA(Gln) + L-glutamine + ATP + H2O = L-glutaminyl-tRNA(Gln) + L-glutamate + ADP + phosphate + H(+). The catalysed reaction is L-aspartyl-tRNA(Asn) + L-glutamine + ATP + H2O = L-asparaginyl-tRNA(Asn) + L-glutamate + ADP + phosphate + 2 H(+). In terms of biological role, allows the formation of correctly charged Asn-tRNA(Asn) or Gln-tRNA(Gln) through the transamidation of misacylated Asp-tRNA(Asn) or Glu-tRNA(Gln) in organisms which lack either or both of asparaginyl-tRNA or glutaminyl-tRNA synthetases. The reaction takes place in the presence of glutamine and ATP through an activated phospho-Asp-tRNA(Asn) or phospho-Glu-tRNA(Gln). This chain is Aspartyl/glutamyl-tRNA(Asn/Gln) amidotransferase subunit B, found in Pseudomonas fluorescens (strain Pf0-1).